We begin with the raw amino-acid sequence, 156 residues long: MPRKGYIAKREILPDPIYKNRVLTKFINQIMLDGKKGTAESICYNAFELIQEKTGKDPIEVFETALKNVMPVLEVKARRVGGANYQVPIEVRTDRRQTLGLRWLVGYARKRSEKTMEERIAGELMDAANNTGGSIKKKEDTHKMAEANKAFAHYRW.

Belongs to the universal ribosomal protein uS7 family. In terms of assembly, part of the 30S ribosomal subunit. Contacts proteins S9 and S11.

Functionally, one of the primary rRNA binding proteins, it binds directly to 16S rRNA where it nucleates assembly of the head domain of the 30S subunit. Is located at the subunit interface close to the decoding center, probably blocks exit of the E-site tRNA. The sequence is that of Small ribosomal subunit protein uS7 from Desulfitobacterium hafniense (strain DSM 10664 / DCB-2).